The primary structure comprises 161 residues: Protein shisa-like-2B (161 aa).

A helical transmembrane segment spans residues 65-85; sequence IGALIGLGIAALVLLAFVISV. Positions 115-134 are disordered; that stretch reads QEGNSNRKSKAPRSNAASNS.

This sequence belongs to the shisa family.

The protein resides in the membrane. This chain is Protein shisa-like-2B (SHISAL2B), found in Bos taurus (Bovine).